The chain runs to 195 residues: dTTP/UTP pyrophosphatase (195 aa).

Aspartate 73 functions as the Proton acceptor in the catalytic mechanism.

Belongs to the Maf family. YhdE subfamily. A divalent metal cation is required as a cofactor.

Its subcellular location is the cytoplasm. The catalysed reaction is dTTP + H2O = dTMP + diphosphate + H(+). The enzyme catalyses UTP + H2O = UMP + diphosphate + H(+). Nucleoside triphosphate pyrophosphatase that hydrolyzes dTTP and UTP. May have a dual role in cell division arrest and in preventing the incorporation of modified nucleotides into cellular nucleic acids. The polypeptide is dTTP/UTP pyrophosphatase (Exiguobacterium sibiricum (strain DSM 17290 / CCUG 55495 / CIP 109462 / JCM 13490 / 255-15)).